Consider the following 318-residue polypeptide: tRNA uridine(34) hydroxylase (318 aa).

The Rhodanese domain maps to 123 to 217 (EDDDTVIIDA…YGKDPETKGQ (95 aa)). Cys-177 serves as the catalytic Cysteine persulfide intermediate.

Belongs to the TrhO family.

It catalyses the reaction uridine(34) in tRNA + AH2 + O2 = 5-hydroxyuridine(34) in tRNA + A + H2O. Its function is as follows. Catalyzes oxygen-dependent 5-hydroxyuridine (ho5U) modification at position 34 in tRNAs. The sequence is that of tRNA uridine(34) hydroxylase from Staphylococcus aureus (strain MRSA252).